The sequence spans 329 residues: MEGALAERVGAEPFHRVTPLLESWALSQVAGMPVFLKYENVQIAGSFKIRGIGHFCQQMAKRGCRHLVCSSGGNAGIAAAYSARKLGIPVTIVLPEGTSVQVVRRLEGEGAEVQLTGKVWDEANVKAQELATRDGWVNVSPFDHPLIWEGHASLVRELKESLGTPPGAVVLAVGGGGLLAGVTAGLLEVGWQHVPIVAMETRGAHSFNSALQAGRPVTLPDITSVAKSLGAKTVAARTLECAKECEVLSEVVEDREAVSAVQRFLDDERMLVEPACGAALAAIYSGILWRLQAEGRLSSALASVVVIVCGGNNISSQQLQELKIQLGCS.

Met1 is subject to N-acetylmethionine. Residue Lys48 is modified to N6-(pyridoxal phosphate)lysine.

The protein belongs to the serine/threonine dehydratase family. Monomer. Homodimer. Pyridoxal 5'-phosphate serves as cofactor. As to expression, abundantly expressed in liver.

It catalyses the reaction L-serine = pyruvate + NH4(+). It carries out the reaction L-threonine = 2-oxobutanoate + NH4(+). The enzyme catalyses L-glutamate = D-glutamate. In terms of biological role, catalyzes the pyridoxal-phosphate-dependent dehydrative deamination of L-threonine and L-serine to ammonia and alpha-ketobutyrate and pyruvate, respectively. Also exhibits racemase activity towards L-glutamate and D-glutamate. The protein is Serine dehydratase-like (Sdsl) of Mus musculus (Mouse).